Reading from the N-terminus, the 443-residue chain is Glucose-6-phosphate isomerase (443 aa).

Glu285 serves as the catalytic Proton donor. Residues His306 and Lys420 contribute to the active site.

The protein belongs to the GPI family.

Its subcellular location is the cytoplasm. It catalyses the reaction alpha-D-glucose 6-phosphate = beta-D-fructose 6-phosphate. The protein operates within carbohydrate biosynthesis; gluconeogenesis. It functions in the pathway carbohydrate degradation; glycolysis; D-glyceraldehyde 3-phosphate and glycerone phosphate from D-glucose: step 2/4. In terms of biological role, catalyzes the reversible isomerization of glucose-6-phosphate to fructose-6-phosphate. This chain is Glucose-6-phosphate isomerase, found in Staphylococcus haemolyticus (strain JCSC1435).